A 224-amino-acid polypeptide reads, in one-letter code: Mammalian ependymin-related protein 1 (224 aa).

Positions 1–37 (MLTRAPRRLVQGPRETWLLGGLWVWILCGLGMAGSPG) are cleaved as a signal peptide. Intrachain disulfides connect cysteine 42-cysteine 172, cysteine 88-cysteine 222, and cysteine 113-cysteine 210. 2 N-linked (GlcNAc...) asparagine glycosylation sites follow: asparagine 130 and asparagine 182.

This sequence belongs to the ependymin family. In terms of assembly, homodimer. N-glycosylated; the glycan contains mannose-6-phosphate moieties. As to expression, detected in brain (at protein level).

Its subcellular location is the lysosome lumen. The protein localises to the secreted. In terms of biological role, binds anionic lipids and gangliosides at acidic pH. This is Mammalian ependymin-related protein 1 (Epdr1) from Rattus norvegicus (Rat).